The sequence spans 348 residues: Protein RecA (348 aa).

65–72 (GPESSGKT) is a binding site for ATP.

The protein belongs to the RecA family.

It is found in the cytoplasm. Can catalyze the hydrolysis of ATP in the presence of single-stranded DNA, the ATP-dependent uptake of single-stranded DNA by duplex DNA, and the ATP-dependent hybridization of homologous single-stranded DNAs. It interacts with LexA causing its activation and leading to its autocatalytic cleavage. The protein is Protein RecA of Vibrio anguillarum (strain ATCC 68554 / 775) (Listonella anguillarum).